The chain runs to 131 residues: Pancreatic polypeptide prohormone (131 aa).

The first 29 residues, 1–29 (MAAAHRCLFLLLLSTCVALLLQPPLGALG), serve as a signal peptide directing secretion. The residue at position 65 (Y65) is a Tyrosine amide.

It belongs to the NPY family.

It localises to the secreted. Functionally, hormone secreted by pancreatic cells that acts as a regulator of pancreatic and gastrointestinal functions probably by signaling through the G protein-coupled receptor NPY4R2. The chain is Pancreatic polypeptide prohormone (PPY) from Bos taurus (Bovine).